The following is a 325-amino-acid chain: Cln5-like protein 2 (325 aa).

A signal peptide spans M1–S19. Residues N88, N117, N133, N163, N182, N189, N238, and N262 are each glycosylated (N-linked (GlcNAc...) asparagine).

Belongs to the CLN5 family.

This is Cln5-like protein 2 (cln5lb) from Dictyostelium discoideum (Social amoeba).